We begin with the raw amino-acid sequence, 149 residues long: Epoxide hydrolase EphG (149 aa).

D93 serves as the catalytic Proton donor. D122 serves as the catalytic Proton acceptor.

This sequence belongs to the limonene-1,2-epoxide hydrolase family. As to quaternary structure, homodimer. Is also present as monomer in solution.

The catalysed reaction is an epoxide + H2O = an ethanediol. It catalyses the reaction 5,6alpha-epoxy-5alpha-cholestan-3beta-ol + H2O = 5alpha-cholestane-3beta,5,6beta-triol. The enzyme catalyses 5,6beta-epoxy-5beta-cholestan-3beta-ol + H2O = 5alpha-cholestane-3beta,5,6beta-triol. With respect to regulation, is inhibited by the anti-epileptic drug valpromide (Ki value of about 100 uM). In terms of biological role, epoxide hydrolase capable of hydrolyzing long or bulky lipophilic epoxides such as 9,10-epoxystearic acid and cholesterol 5,6-oxide in vitro. The physiological substrates have yet to be identified, but could be fatty acid or steroid derivatives. This Mycobacterium tuberculosis (strain ATCC 25618 / H37Rv) protein is Epoxide hydrolase EphG (ephG).